The following is a 284-amino-acid chain: Pantothenate synthetase (284 aa).

30-37 lines the ATP pocket; it reads MGNLHDGH. Catalysis depends on H37, which acts as the Proton donor. Q61 is a binding site for (R)-pantoate. Q61 contributes to the beta-alanine binding site. 149–152 is a binding site for ATP; it reads GEKD. (R)-pantoate is bound at residue Q155. Residues I178 and 186 to 189 each bind ATP; that span reads LSSR.

The protein belongs to the pantothenate synthetase family. As to quaternary structure, homodimer.

Its subcellular location is the cytoplasm. The catalysed reaction is (R)-pantoate + beta-alanine + ATP = (R)-pantothenate + AMP + diphosphate + H(+). It participates in cofactor biosynthesis; (R)-pantothenate biosynthesis; (R)-pantothenate from (R)-pantoate and beta-alanine: step 1/1. Its function is as follows. Catalyzes the condensation of pantoate with beta-alanine in an ATP-dependent reaction via a pantoyl-adenylate intermediate. The polypeptide is Pantothenate synthetase (Salmonella typhi).